The sequence spans 138 residues: Sec-independent protein translocase protein TatB (138 aa).

The chain crosses the membrane as a helical span at residues 1–21 (MFDIGFSELLLIAVVALVVLG). Positions 116 to 138 (VHHVHVPPPSTSTHGNNGQEKSQ) are disordered. Over residues 126–138 (TSTHGNNGQEKSQ) the composition is skewed to polar residues.

It belongs to the TatB family. As to quaternary structure, the Tat system comprises two distinct complexes: a TatABC complex, containing multiple copies of TatA, TatB and TatC subunits, and a separate TatA complex, containing only TatA subunits. Substrates initially bind to the TatABC complex, which probably triggers association of the separate TatA complex to form the active translocon.

It is found in the cell inner membrane. Its function is as follows. Part of the twin-arginine translocation (Tat) system that transports large folded proteins containing a characteristic twin-arginine motif in their signal peptide across membranes. Together with TatC, TatB is part of a receptor directly interacting with Tat signal peptides. TatB may form an oligomeric binding site that transiently accommodates folded Tat precursor proteins before their translocation. In Xylella fastidiosa (strain Temecula1 / ATCC 700964), this protein is Sec-independent protein translocase protein TatB.